We begin with the raw amino-acid sequence, 35 residues long: Photosystem II reaction center protein T (35 aa).

Residues 3 to 23 (ALVYTFLLVSTLGIIFFAIFF) traverse the membrane as a helical segment.

It belongs to the PsbT family. In terms of assembly, PSII is composed of 1 copy each of membrane proteins PsbA, PsbB, PsbC, PsbD, PsbE, PsbF, PsbH, PsbI, PsbJ, PsbK, PsbL, PsbM, PsbT, PsbY, PsbZ, Psb30/Ycf12, at least 3 peripheral proteins of the oxygen-evolving complex and a large number of cofactors. It forms dimeric complexes.

It is found in the plastid. It localises to the chloroplast thylakoid membrane. Functionally, found at the monomer-monomer interface of the photosystem II (PS II) dimer, plays a role in assembly and dimerization of PSII. PSII is a light-driven water plastoquinone oxidoreductase, using light energy to abstract electrons from H(2)O, generating a proton gradient subsequently used for ATP formation. The polypeptide is Photosystem II reaction center protein T (Pisum sativum (Garden pea)).